The chain runs to 191 residues: Glucose-6-phosphate 1-dehydrogenase (191 aa).

Ala-2 bears the N-acetylalanine mark. Residue Ser-8 is modified to Phosphoserine. Thr-10 carries the phosphothreonine modification. Residues 38–45 (GASGDLAK) and Tyr-86 contribute to the NADP(+) site. Asp-101 serves as a coordination point for D-glucose 6-phosphate. The Proton acceptor role is filled by His-106. Arg-163 is an NADP(+) binding site. Lys-173 bears the N6-acetyllysine mark. NADP(+) contacts are provided by Tyr-179 and Trp-185. At Tyr-179 the chain carries Phosphotyrosine.

This sequence belongs to the glucose-6-phosphate dehydrogenase family. In terms of assembly, homotetramer; dimer of dimers. Interacts with SIRT2; the interaction is enhanced by H(2)O(2) treatment. Forms a ternary complex with ALDOB and TP53; this interaction is direct. ALDOB stabilizes the complex inhibiting G6PD activity and keeping oxidative pentose phosphate metabolism in check. Acetylated by ELP3; acetylation inhibits its homodimerization and enzyme activity. Deacetylated by SIRT2; deacetylation stimulates its enzyme activity.

It is found in the cytoplasm. The protein localises to the cytosol. The protein resides in the membrane. The enzyme catalyses D-glucose 6-phosphate + NADP(+) = 6-phospho-D-glucono-1,5-lactone + NADPH + H(+). It participates in carbohydrate degradation; pentose phosphate pathway; D-ribulose 5-phosphate from D-glucose 6-phosphate (oxidative stage): step 1/3. In terms of biological role, cytosolic glucose-6-phosphate dehydrogenase that catalyzes the first and rate-limiting step of the oxidative branch within the pentose phosphate pathway/shunt, an alternative route to glycolysis for the dissimilation of carbohydrates and a major source of reducing power and metabolic intermediates for fatty acid and nucleic acid biosynthetic processes. The chain is Glucose-6-phosphate 1-dehydrogenase (G6PD) from Didelphis virginiana (North American opossum).